The primary structure comprises 166 residues: Putative transmembrane protein ORF166 (166 aa).

A run of 3 helical transmembrane segments spans residues 35-55, 60-80, and 124-144; these read IILVFLITMPVRFFICIFAGL, PICVLINLLPPLAIAIPFVTA, and IFCLVGIIIADVLNPILAFIN.

Its subcellular location is the host membrane. The sequence is that of Putative transmembrane protein ORF166 from Acidianus convivator (ABV).